A 69-amino-acid polypeptide reads, in one-letter code: MADLKPSLTGLTEEEAKEFHGIFVTSTVLYLATAVIVHYLVWTARPWIAPIPKGWVNLEGVQSALSYLV.

Residues 2–21 (ADLKPSLTGLTEEEAKEFHG) are Cytoplasmic-facing. 2 residues coordinate a bacteriochlorophyll: His-20 and His-38. The chain crosses the membrane as a helical span at residues 22 to 44 (IFVTSTVLYLATAVIVHYLVWTA). The Periplasmic portion of the chain corresponds to 45-56 (RPWIAPIPKGWV). A propeptide spanning residues 57 to 69 (NLEGVQSALSYLV) is cleaved from the precursor.

It belongs to the antenna complex beta subunit family. The core complex is formed by different alpha and beta chains, binding bacteriochlorophyll molecules, and arranged most probably in tetrameric structures disposed around the reaction center. The non-pigmented gamma chains may constitute additional components.

The protein localises to the cell inner membrane. Its function is as follows. Antenna complexes are light-harvesting systems, which transfer the excitation energy to the reaction centers. The protein is Light-harvesting protein B-1015 beta chain (pufB) of Blastochloris viridis (Rhodopseudomonas viridis).